The chain runs to 454 residues: Bifunctional protein GlmU (454 aa).

The segment at 1-227 is pyrophosphorylase; sequence MKKLSVVILA…KMEVEGANNR (227 aa). Residues 9-12, Lys-23, Gln-74, 79-80, 101-103, Gly-138, Glu-152, Asn-167, and Asn-225 each bind UDP-N-acetyl-alpha-D-glucosamine; these read LAAG, GT, and YGD. Asp-103 is a Mg(2+) binding site. Asn-225 contacts Mg(2+). The linker stretch occupies residues 228–248; the sequence is LQLAALERYYQHKQAERLLLE. Positions 249–454 are N-acetyltransferase; sequence GVMLIDPARF…AGWQRPTKKK (206 aa). UDP-N-acetyl-alpha-D-glucosamine contacts are provided by Arg-331 and Lys-349. Residue His-361 is the Proton acceptor of the active site. The UDP-N-acetyl-alpha-D-glucosamine site is built by Tyr-364 and Asn-375. Acetyl-CoA-binding positions include Ala-378, 384–385, Ser-403, Ala-421, and Arg-438; that span reads NY.

It in the N-terminal section; belongs to the N-acetylglucosamine-1-phosphate uridyltransferase family. This sequence in the C-terminal section; belongs to the transferase hexapeptide repeat family. As to quaternary structure, homotrimer. Mg(2+) serves as cofactor.

The protein resides in the cytoplasm. It carries out the reaction alpha-D-glucosamine 1-phosphate + acetyl-CoA = N-acetyl-alpha-D-glucosamine 1-phosphate + CoA + H(+). The catalysed reaction is N-acetyl-alpha-D-glucosamine 1-phosphate + UTP + H(+) = UDP-N-acetyl-alpha-D-glucosamine + diphosphate. The protein operates within nucleotide-sugar biosynthesis; UDP-N-acetyl-alpha-D-glucosamine biosynthesis; N-acetyl-alpha-D-glucosamine 1-phosphate from alpha-D-glucosamine 6-phosphate (route II): step 2/2. It functions in the pathway nucleotide-sugar biosynthesis; UDP-N-acetyl-alpha-D-glucosamine biosynthesis; UDP-N-acetyl-alpha-D-glucosamine from N-acetyl-alpha-D-glucosamine 1-phosphate: step 1/1. Its pathway is bacterial outer membrane biogenesis; LPS lipid A biosynthesis. In terms of biological role, catalyzes the last two sequential reactions in the de novo biosynthetic pathway for UDP-N-acetylglucosamine (UDP-GlcNAc). The C-terminal domain catalyzes the transfer of acetyl group from acetyl coenzyme A to glucosamine-1-phosphate (GlcN-1-P) to produce N-acetylglucosamine-1-phosphate (GlcNAc-1-P), which is converted into UDP-GlcNAc by the transfer of uridine 5-monophosphate (from uridine 5-triphosphate), a reaction catalyzed by the N-terminal domain. This is Bifunctional protein GlmU from Mannheimia succiniciproducens (strain KCTC 0769BP / MBEL55E).